Here is a 377-residue protein sequence, read N- to C-terminus: RIB43A-like with coiled-coils protein 2 (377 aa).

2 coiled-coil regions span residues 217–250 (NKNQALESAEKKIQERKQEQEDNLAEISNMLRGD) and 282–308 (EEIRLVQRQQVQEKLRLQEEERQRDMD).

The protein belongs to the RIB43A family. In terms of assembly, microtubule inner protein component of sperm flagellar doublet microtubules. As to expression, expressed in trachea multiciliated cells.

The protein resides in the cytoplasm. The protein localises to the cytoskeleton. It is found in the cilium axoneme. Its subcellular location is the flagellum axoneme. Microtubule inner protein (MIP) part of the dynein-decorated doublet microtubules (DMTs) in cilia axoneme, which is required for motile cilia beating. This Bos taurus (Bovine) protein is RIB43A-like with coiled-coils protein 2.